The primary structure comprises 443 residues: MEKLASLYHHHLATLQARAQTVLARHQLDALLIHSGELLTVFLDDHDYPFKVNPQFKAWVPVTQVPNCWLWVDGVNPPKLWFYSPVDYWHNVAPVPESFWTEEIDITVLRNADDIGQLLPSQRERVAYIGYAPQRAQDLGIRADNINPQSVLDYLHYHRAYKTDYELACMREAQKTAVIGHRAAHEAFLSGMSEFDINLAYLTATGHRDIDVPYGNIVALNEHAAVLHYTQLDHHAPSDVRSFLIDAGAEYNGYAADLTRTYSAQSDGAFALLIKDLNQEMLALIDTVQAGVRYTDYHIQMHQRIAKLLKSHQLVRDISEEAMVEQGLTSPFLPHGLGHPLGLQVHDVAGFMQDDRGTHLAAPSQYPYLRCTRVLEPGMVMTIEPGIYFIESLLAPWREGELCQHFDWQKVDALKPFGGIRIEDNIVIHDGRVENMTRDLNLA.

D246, D257, H339, E384, and E423 together coordinate Mn(2+).

Belongs to the peptidase M24B family. Bacterial-type prolidase subfamily. The cofactor is Mn(2+).

The enzyme catalyses Xaa-L-Pro dipeptide + H2O = an L-alpha-amino acid + L-proline. Splits dipeptides with a prolyl residue in the C-terminal position. In Pectobacterium carotovorum subsp. carotovorum (strain PC1), this protein is Xaa-Pro dipeptidase.